A 427-amino-acid chain; its full sequence is Probable G-protein coupled receptor 150 (427 aa).

Topologically, residues 1–3 (MED) are extracellular. The helical transmembrane segment at 4 to 24 (PFSLAILNPASNLSVPTQPSW) threads the bilayer. The Cytoplasmic segment spans residues 25-50 (SLNLTSEQGASVPGPHSPPRGPPSHR). A helical membrane pass occupies residues 51-71 (IHLVFLGIILVAAVAGNTTVL). Residues 72 to 89 (CRLCGGSSGPWPGPKRRK) are Extracellular-facing. A helical membrane pass occupies residues 90–110 (MDFLLVQLAAADLYASGGTAL). Topologically, residues 111–170 (SQLAWELLGDPRPALGDLACRLSHLLQASGRGASAHLVALIALERQLAVRIPQGPQLPAR) are cytoplasmic. Residues 171–191 (ALAALSWLLALLLALPPTFVV) form a helical membrane-spanning segment. Residues 192-230 (RWDAPPSSTANAWPGKHCCRGIFAPLPRWHLQVYALYEA) are Extracellular-facing. A helical transmembrane segment spans residues 231–251 (IVGFAAPVALLGFSCGHLLCV). Topologically, residues 252 to 286 (WWQRGSQAPVARMPWSPSMARASLPSALPQAKVQS) are cytoplasmic. A helical membrane pass occupies residues 287 to 307 (LKMSLALALLFVGCDLPYFAA). Topologically, residues 308–327 (RLAAAWSSKPAGDWERESLV) are extracellular. A helical transmembrane segment spans residues 328–348 (AAMRVLEVANSAINPLIYLFF). At 349-427 (QAGDCRLWRR…PPPCSCESAF (79 aa)) the chain is on the cytoplasmic side. The disordered stretch occupies residues 402–427 (EERNQGCLRPPPPRPRPPPCSCESAF). Positions 410–421 (RPPPPRPRPPPC) are enriched in pro residues.

Belongs to the G-protein coupled receptor 1 family.

The protein resides in the cell membrane. Its function is as follows. Orphan receptor. This Mus musculus (Mouse) protein is Probable G-protein coupled receptor 150 (Gpr150).